We begin with the raw amino-acid sequence, 115 residues long: Large ribosomal subunit protein bL31B (115 aa).

This sequence belongs to the bacterial ribosomal protein bL31 family. Type B subfamily. Part of the 50S ribosomal subunit.

In Polynucleobacter necessarius subsp. necessarius (strain STIR1), this protein is Large ribosomal subunit protein bL31B.